The sequence spans 445 residues: Tubulin beta chain (445 aa).

Gln11, Glu69, Ser138, Gly142, Thr143, Gly144, Asn204, and Asn226 together coordinate GTP. Glu69 lines the Mg(2+) pocket. The interval 426–445 (QDATAEEEGEFEEEEGDVEA) is disordered. A compositionally biased stretch (acidic residues) spans 429–445 (TAEEEGEFEEEEGDVEA).

This sequence belongs to the tubulin family. As to quaternary structure, dimer of alpha and beta chains. A typical microtubule is a hollow water-filled tube with an outer diameter of 25 nm and an inner diameter of 15 nM. Alpha-beta heterodimers associate head-to-tail to form protofilaments running lengthwise along the microtubule wall with the beta-tubulin subunit facing the microtubule plus end conferring a structural polarity. Microtubules usually have 13 protofilaments but different protofilament numbers can be found in some organisms and specialized cells. Interacts with DCX/apicortin; the interaction stabilizes microtubule assembly. Requires Mg(2+) as cofactor.

Its subcellular location is the cytoplasm. The protein resides in the cytoskeleton. In terms of biological role, tubulin is the major constituent of microtubules, a cylinder consisting of laterally associated linear protofilaments composed of alpha- and beta-tubulin heterodimers. Microtubules grow by the addition of GTP-tubulin dimers to the microtubule end, where a stabilizing cap forms. Below the cap, tubulin dimers are in GDP-bound state, owing to GTPase activity of alpha-tubulin. In Plasmodium falciparum, this protein is Tubulin beta chain.